The primary structure comprises 1109 residues: MESPLIYVMLVLLNVFVFSSGVIHNKGKERTYFSCSGEGILTGLHTIKLFLTMDNLKVRCFFRNENQSPSKEILGLFTSGGLAPNMIITNSTFYGGYYFKLTPFSNRLEWLIDIPRQNITVNTDIAAVEQWMIKITMHEGLNIYDTEGTLLDLVREPILQWNLGRVLTEMEVRDLYPEVNDIKVTKSPCANDVALIGFMMKPSSNGVFIGKTISGFWTYKECIWHDLTEIIYAELKDEHQGLTVIDLVLTNHFLVILTSLGLYVSSDLRYPTTSQIKLSRAEFCGFERVDYIRGNLWYNEKCFANRESFEVDYVTITFNRNRTLSESSSCFFSKEPFLHWLPCVFSTIKNEKSIPRVITFLIDQETDSGIYLFNVQDTKETYVTVAMLKDGKPSPRPKFPSFHFPSTFTLPLGMIFHPRSHFLYVYGSQIWVSMDGGNTFEMLCNLFSHHVTKTSNSFYTSDIVFIVEDGRILTTKAGLTTYSELGILKDAIFTLYYDQLGYIHKLTPENFDAGSKLLGHGNSGSIFGKRPDLGFEAILVPQYISTNEMYFFAHVPLTMPTNIQWKKRFKTIHLGKTIEFSKTGLANIKNVYMHKTEPVGFQTSIHTEIIVPFGIENSKDSPCLLSDLEITYSGKLYYTIKLLSKNPLHELKSTDVEKSVLIPGYSSFLIMNITDKWTASALATMPQAIKSNLKFLTGSWFLYNFGTAGGRKWSISTRQCNYWIQQDSLDFMSLNLVKYIDVGNTIDFQFKIIPKAMSTFPIPPVSMVVGNPGLVEVKTQGVFDLNENYYLDIHVSGRFFQKGSTSIALVLWEGSSKCYAITLLPTIKSSCSYLRTMHHTPGRHIPPEDWISGVHKDSQGFNMIKTLPINYRPPSHMGISIPLTDNFYHADPSKPIPRNQFHKSKETGKYKQCANVTSRAMCNCSEHQKFSHAVAFSDCKEKVHRFKFPVTQYPVVLEIFNERDKISAEPPYLVTMTEVNMRKNWQLKHNEPENVKKMKHYLEPLLKTPVYNPLGLNLTIQGSELFHFKVSVVPGVSFCELSEEFQIYVDEVPLPFPGHALIAVATSVVLGVLIFIAFVFQLRNIHPLKALKKSIRGNPGLTSSTTVSS.

Residues 1 to 1055 (MESPLIYVML…QIYVDEVPLP (1055 aa)) are Extracellular-facing. C35 and C60 are oxidised to a cystine. 3 N-linked (GlcNAc...) asparagine glycosylation sites follow: N66, N90, and N118. C189 and C302 form a disulfide bridge. N321 is a glycosylation site (N-linked (GlcNAc...) asparagine). The cysteines at positions 330 and 343 are disulfide-linked. N-linked (GlcNAc...) asparagine glycosylation occurs at N672. Cystine bridges form between C720/C818, C831/C1039, C913/C922, and C924/C939. N-linked (GlcNAc...) asparagine glycosylation is found at N915 and N923. A glycan (N-linked (GlcNAc...) asparagine) is linked at N1017. Residues 1056–1078 (FPGHALIAVATSVVLGVLIFIAF) traverse the membrane as a helical segment. Residues 1079–1109 (VFQLRNIHPLKALKKSIRGNPGLTSSTTVSS) lie on the Cytoplasmic side of the membrane.

Component of the CatSper complex or CatSpermasome composed of the core pore-forming members CATSPER1, CATSPER2, CATSPER3 and CATSPER4 as well as auxiliary members CATSPERB, CATSPERG2, CATSPERD, CATSPERE, CATSPERZ, C2CD6/CATSPERT, SLCO6C1, TMEM249, TMEM262 and EFCAB9. HSPA1 may be an additional auxiliary complex member. The core complex members CATSPER1, CATSPER2, CATSPER3 and CATSPER4 form a heterotetrameric channel. The auxiliary CATSPERB, CATSPERG2, CATSPERD and CATSPERE subunits form a pavilion-like structure over the pore which stabilizes the complex through interactions with CATSPER4, CATSPER3, CATSPER1 and CATSPER2 respectively. SLCO6C1 interacts with CATSPERE and TMEM262/CATSPERH interacts with CATSPERB, further stabilizing the complex. C2CD6/CATSPERT interacts at least with CATSPERD and is required for targeting the CatSper complex in the flagellar membrane. As to expression, testis-specific. Specifically present in the principal piece of sperm tail (at protein level). Specifically expressed in the seminiferous tubules but not in the interstitial cells. Within the tubules, it is expressed in spermatocytes and spermatids, but not in spermatogonia.

Its subcellular location is the cell projection. It is found in the cilium. It localises to the flagellum membrane. Auxiliary component of the CatSper complex, a complex involved in sperm cell hyperactivation. Sperm cell hyperactivation is needed for sperm motility which is essential late in the preparation of sperm for fertilization. This is Cation channel sperm-associated auxiliary subunit beta from Mus musculus (Mouse).